A 307-amino-acid polypeptide reads, in one-letter code: Elongation factor Ts (307 aa).

An involved in Mg(2+) ion dislocation from EF-Tu region spans residues 80-83; that stretch reads TDFV.

It belongs to the EF-Ts family.

The protein resides in the cytoplasm. Functionally, associates with the EF-Tu.GDP complex and induces the exchange of GDP to GTP. It remains bound to the aminoacyl-tRNA.EF-Tu.GTP complex up to the GTP hydrolysis stage on the ribosome. The polypeptide is Elongation factor Ts (Nitrobacter hamburgensis (strain DSM 10229 / NCIMB 13809 / X14)).